We begin with the raw amino-acid sequence, 143 residues long: Large ribosomal subunit protein uL11 (143 aa).

This sequence belongs to the universal ribosomal protein uL11 family. As to quaternary structure, part of the ribosomal stalk of the 50S ribosomal subunit. Interacts with L10 and the large rRNA to form the base of the stalk. L10 forms an elongated spine to which L12 dimers bind in a sequential fashion forming a multimeric L10(L12)X complex. In terms of processing, one or more lysine residues are methylated.

Functionally, forms part of the ribosomal stalk which helps the ribosome interact with GTP-bound translation factors. The protein is Large ribosomal subunit protein uL11 of Allorhizobium ampelinum (strain ATCC BAA-846 / DSM 112012 / S4) (Agrobacterium vitis (strain S4)).